Here is a 359-residue protein sequence, read N- to C-terminus: MITVNVDLGERAYPIHIGAGLIGRTDLFAPHITGSSVTIVTNTTVDPLYGDALRAALAPLGKRVSTVVLPDGEAYKNWETLNLIFDGLLTERADRKTTLVALGGGVIGDMTGFAAACYMRGVPFIQVPTTLLSQVDSSVGGKTGINHPLGKNMIGAFYQPQAVIADIGALTTLPDRELAAGVAEVIKTGAIADAAFFDWIEANVDALNRREPAALAHAVKRSCEIKASVVAADEREGGLRAILNFGHTFGHAIEAGLGYGEWLHGEAVGCGMVMAADLSVRLGLLDEASRQRLDAVIAAAHLPVRGPALGDARYMELMRVDKKAEAGAIKFILLKRFGDTLITQAPDEAVFATLAQTTR.

Residues 71–76 (DGEAYK), 105–109 (GVIGD), 129–130 (TT), K142, and K151 contribute to the NAD(+) site. Zn(2+) is bound by residues E184, H247, and H264.

Belongs to the sugar phosphate cyclases superfamily. Dehydroquinate synthase family. It depends on Co(2+) as a cofactor. The cofactor is Zn(2+). NAD(+) is required as a cofactor.

The protein localises to the cytoplasm. It carries out the reaction 7-phospho-2-dehydro-3-deoxy-D-arabino-heptonate = 3-dehydroquinate + phosphate. Its pathway is metabolic intermediate biosynthesis; chorismate biosynthesis; chorismate from D-erythrose 4-phosphate and phosphoenolpyruvate: step 2/7. Catalyzes the conversion of 3-deoxy-D-arabino-heptulosonate 7-phosphate (DAHP) to dehydroquinate (DHQ). The protein is 3-dehydroquinate synthase of Burkholderia ambifaria (strain ATCC BAA-244 / DSM 16087 / CCUG 44356 / LMG 19182 / AMMD) (Burkholderia cepacia (strain AMMD)).